A 220-amino-acid chain; its full sequence is Fructose-6-phosphate aldolase 1 (220 aa).

Residue Lys-85 is the Schiff-base intermediate with substrate of the active site.

This sequence belongs to the transaldolase family. Type 3A subfamily. Homodecamer.

It localises to the cytoplasm. It carries out the reaction beta-D-fructose 6-phosphate = dihydroxyacetone + D-glyceraldehyde 3-phosphate. Its function is as follows. Catalyzes the reversible formation of fructose 6-phosphate from dihydroxyacetone and D-glyceraldehyde 3-phosphate via an aldolization reaction. The protein is Fructose-6-phosphate aldolase 1 (fsaA) of Escherichia coli O6:H1 (strain CFT073 / ATCC 700928 / UPEC).